Consider the following 121-residue polypeptide: Small ribosomal subunit protein uS13 (121 aa).

The interval 91–121 (HRRGLPTRGQNTKNNARTRKGPVKTVANKKK) is disordered. Over residues 106-121 (ARTRKGPVKTVANKKK) the composition is skewed to basic residues.

Belongs to the universal ribosomal protein uS13 family. Part of the 30S ribosomal subunit. Forms a loose heterodimer with protein S19. Forms two bridges to the 50S subunit in the 70S ribosome.

Its function is as follows. Located at the top of the head of the 30S subunit, it contacts several helices of the 16S rRNA. In the 70S ribosome it contacts the 23S rRNA (bridge B1a) and protein L5 of the 50S subunit (bridge B1b), connecting the 2 subunits; these bridges are implicated in subunit movement. Contacts the tRNAs in the A and P-sites. In Macrococcus caseolyticus (strain JCSC5402) (Macrococcoides caseolyticum), this protein is Small ribosomal subunit protein uS13.